The primary structure comprises 100 residues: Urease subunit gamma (100 aa).

This sequence belongs to the urease gamma subunit family. Heterotrimer of UreA (gamma), UreB (beta) and UreC (alpha) subunits. Three heterotrimers associate to form the active enzyme.

It localises to the cytoplasm. The catalysed reaction is urea + 2 H2O + H(+) = hydrogencarbonate + 2 NH4(+). Its pathway is nitrogen metabolism; urea degradation; CO(2) and NH(3) from urea (urease route): step 1/1. The polypeptide is Urease subunit gamma (Dinoroseobacter shibae (strain DSM 16493 / NCIMB 14021 / DFL 12)).